We begin with the raw amino-acid sequence, 87 residues long: Small ribosomal subunit protein uS17 (87 aa).

Belongs to the universal ribosomal protein uS17 family. As to quaternary structure, part of the 30S ribosomal subunit.

Its function is as follows. One of the primary rRNA binding proteins, it binds specifically to the 5'-end of 16S ribosomal RNA. The sequence is that of Small ribosomal subunit protein uS17 from Geobacillus stearothermophilus (Bacillus stearothermophilus).